A 406-amino-acid chain; its full sequence is MQQTSNSNRTMMSFRRFTTTKLQLSHWDFTIYDTYIKMTNIHHITTTSNDSCLPTCPPLAEILKDKIPGYAFYSSAWQCQTMWMRFLIFGDEDNCIKTQLMFIDRSAENINIRLQHASYQMAPAHSLVFYIFPIILLRLDGLYLRVLPDKHPGVMDASCSQTWSCLNTPMPVVRLQGGMLSWDDEDMPFMLGQKTKPFLSKAVKVHALADEVCKVNDVCMGDNYMKIHLDFHFALDKHLPVDICMSPTNNTVLSFKFNPFVKTPWEPTPAKVPIVYMGEPVLIPGSCSTIVEYCNRYYVAKGLRITAIIVSVETDDTEFETDVCEWASECTAKIMVSNKSLFPRTLAPGTHIANAHFLLAERHFFSRILSDKNLKKLSTCIKLPGGFWVNAAKLPKLCKTCLSERV.

This is an uncharacterized protein from Connochaetes taurinus (Blue wildebeest).